The primary structure comprises 234 residues: Adenosine 5'-phosphosulfate reductase (234 aa).

Cys-120, Cys-121, Cys-203, and Cys-206 together coordinate [4Fe-4S] cluster. The active-site Nucleophile; cysteine thiosulfonate intermediate is the Cys-229.

It belongs to the PAPS reductase family. CysH subfamily. It depends on [4Fe-4S] cluster as a cofactor.

It localises to the cytoplasm. It catalyses the reaction [thioredoxin]-disulfide + sulfite + AMP + 2 H(+) = adenosine 5'-phosphosulfate + [thioredoxin]-dithiol. The protein operates within sulfur metabolism; hydrogen sulfide biosynthesis; sulfite from sulfate. Its function is as follows. Catalyzes the formation of sulfite from adenosine 5'-phosphosulfate (APS) using thioredoxin as an electron donor. The sequence is that of Adenosine 5'-phosphosulfate reductase from Bacillus cytotoxicus (strain DSM 22905 / CIP 110041 / 391-98 / NVH 391-98).